The following is a 378-amino-acid chain: Rhodopsin (378 aa).

Residues 1-53 (MMSIASGPSHAAYTWTAQGGGFGNQTVVDKVPPEMLHLVDAHWYQFPPMNPLW) are Extracellular-facing. N-linked (GlcNAc...) asparagine glycosylation is present at Asn24. A helical membrane pass occupies residues 54–78 (HAILGFVIGILGMISVIGNGMVIYI). Over 79 to 90 (FTTTKSLRTPSN) the chain is Cytoplasmic. A helical transmembrane segment spans residues 91 to 115 (LLVINLAISDFLMMLSMSPAMVINC). Topologically, residues 116–130 (YYETWVLGPLVCELY) are extracellular. The cysteines at positions 127 and 204 are disulfide-linked. A helical membrane pass occupies residues 131–150 (GLTGSLFGCGSIWTMTMIAF). Residues 151 to 169 (DRYNVIVKGLSAKPMTING) lie on the Cytoplasmic side of the membrane. The chain crosses the membrane as a helical span at residues 170–193 (ALLRILGIWFFSLGWTIAPMFGWN). The Extracellular portion of the chain corresponds to 194 to 217 (RYVPEGNMTACGTDYLTKDLLSRS). N-linked (GlcNAc...) asparagine glycosylation is present at Asn200. The helical transmembrane segment at 218 to 245 (YILVYSFFCYFLPLFLIIYSYFFIIQAV) threads the bilayer. Residues 246–280 (AAHEKNMREQAKKMNVASLRSAENQSTSAECKLAK) lie on the Cytoplasmic side of the membrane. Residues 281–304 (VALMTISLWFMAWTPYLVINYAGI) traverse the membrane as a helical segment. Residues 305 to 311 (FETVKIN) lie on the Extracellular side of the membrane. The helical transmembrane segment at 312-336 (PLFTIWGSLFAKANAVYNPIVYGIS) threads the bilayer. An N6-(retinylidene)lysine modification is found at Lys323. Topologically, residues 337–378 (HPKYRAALFQRFPSLACSSGPAGADTLSTTTTVTEGTEKPAA) are cytoplasmic. Residues 356-378 (GPAGADTLSTTTTVTEGTEKPAA) are disordered. The segment covering 362 to 371 (TLSTTTTVTE) has biased composition (low complexity).

Belongs to the G-protein coupled receptor 1 family. Opsin subfamily. Post-translationally, phosphorylated on some or all of the serine and threonine residues present in the C-terminal region.

It is found in the membrane. In terms of biological role, visual pigments are the light-absorbing molecules that mediate vision. They consist of an apoprotein, opsin, covalently linked to cis-retinal. In Cataglyphis bombycina (Saharan silver ant), this protein is Rhodopsin.